The primary structure comprises 215 residues: N-(5'-phosphoribosyl)anthranilate isomerase (215 aa).

It belongs to the TrpF family.

The enzyme catalyses N-(5-phospho-beta-D-ribosyl)anthranilate = 1-(2-carboxyphenylamino)-1-deoxy-D-ribulose 5-phosphate. It functions in the pathway amino-acid biosynthesis; L-tryptophan biosynthesis; L-tryptophan from chorismate: step 3/5. This Parvibaculum lavamentivorans (strain DS-1 / DSM 13023 / NCIMB 13966) protein is N-(5'-phosphoribosyl)anthranilate isomerase.